Here is a 337-residue protein sequence, read N- to C-terminus: MTHQVSVLHQDKKFDIALRPKGLREFCGQAQLTERLELFLSAALQRGEVPGHCLFFGPPGLGKTSLAHIVARTVGKGLVVASGPQLVKPSDLLGLLTSLQEGDVFFIDEIHRMGKVAEEYLYSAMEDYKIDITIDSGPGARSISVDLAPFSLVGATTRSGMLSEPLRARFSFSGRVSYYSDEDLATILKRSSNLLGIDADAAALYEIARRSRGTPRLANNLLRWVRDFAQMREGNRINSDVAEKALSMLLIDDWGLNEIDIKLLTTIIDYYQGGPVGIKTLSVAVGEDIKTLEDVYEPFLILKGLLKKTSRGRMVTQLAYNHLKRCSDNLQILGEEK.

A large ATPase domain (RuvB-L) region spans residues 1–179; the sequence is MTHQVSVLHQ…FSFSGRVSYY (179 aa). Residues leucine 18, arginine 19, glycine 60, lysine 63, threonine 64, serine 65, 126–128, arginine 169, tyrosine 179, and arginine 216 contribute to the ATP site; that span reads EDY. Residue threonine 64 participates in Mg(2+) binding. A small ATPAse domain (RuvB-S) region spans residues 180 to 250; sequence SDEDLATILK…VAEKALSMLL (71 aa). Residues 253–337 are head domain (RuvB-H); that stretch reads DWGLNEIDIK…DNLQILGEEK (85 aa). Residues lysine 308 and arginine 313 each coordinate DNA.

The protein belongs to the RuvB family. Homohexamer. Forms an RuvA(8)-RuvB(12)-Holliday junction (HJ) complex. HJ DNA is sandwiched between 2 RuvA tetramers; dsDNA enters through RuvA and exits via RuvB. An RuvB hexamer assembles on each DNA strand where it exits the tetramer. Each RuvB hexamer is contacted by two RuvA subunits (via domain III) on 2 adjacent RuvB subunits; this complex drives branch migration. In the full resolvosome a probable DNA-RuvA(4)-RuvB(12)-RuvC(2) complex forms which resolves the HJ.

Its subcellular location is the cytoplasm. The catalysed reaction is ATP + H2O = ADP + phosphate + H(+). Functionally, the RuvA-RuvB-RuvC complex processes Holliday junction (HJ) DNA during genetic recombination and DNA repair, while the RuvA-RuvB complex plays an important role in the rescue of blocked DNA replication forks via replication fork reversal (RFR). RuvA specifically binds to HJ cruciform DNA, conferring on it an open structure. The RuvB hexamer acts as an ATP-dependent pump, pulling dsDNA into and through the RuvAB complex. RuvB forms 2 homohexamers on either side of HJ DNA bound by 1 or 2 RuvA tetramers; 4 subunits per hexamer contact DNA at a time. Coordinated motions by a converter formed by DNA-disengaged RuvB subunits stimulates ATP hydrolysis and nucleotide exchange. Immobilization of the converter enables RuvB to convert the ATP-contained energy into a lever motion, pulling 2 nucleotides of DNA out of the RuvA tetramer per ATP hydrolyzed, thus driving DNA branch migration. The RuvB motors rotate together with the DNA substrate, which together with the progressing nucleotide cycle form the mechanistic basis for DNA recombination by continuous HJ branch migration. Branch migration allows RuvC to scan DNA until it finds its consensus sequence, where it cleaves and resolves cruciform DNA. In Chlamydia felis (strain Fe/C-56) (Chlamydophila felis), this protein is Holliday junction branch migration complex subunit RuvB.